Consider the following 258-residue polypeptide: Elongation factor Ts (258 aa).

The tract at residues 81–84 (TDFV) is involved in Mg(2+) ion dislocation from EF-Tu. The disordered stretch occupies residues 216–258 (GLKPAEAPKVEETPPAPPEEPAPEPAPAAESKPAKKGSAKKKK). Residues 229-241 (PPAPPEEPAPEPA) are compositionally biased toward pro residues. Residues 249 to 258 (AKKGSAKKKK) are compositionally biased toward basic residues.

Belongs to the EF-Ts family.

The protein localises to the cytoplasm. In terms of biological role, associates with the EF-Tu.GDP complex and induces the exchange of GDP to GTP. It remains bound to the aminoacyl-tRNA.EF-Tu.GTP complex up to the GTP hydrolysis stage on the ribosome. The polypeptide is Elongation factor Ts (Synechococcus sp. (strain JA-2-3B'a(2-13)) (Cyanobacteria bacterium Yellowstone B-Prime)).